The sequence spans 243 residues: Pyrimidodiazepine synthase (243 aa).

The region spanning 20 to 102 (GILRLYSMRF…YLDEQYPLRP (83 aa)) is the GST N-terminal domain. Catalysis depends on Cys-30, which acts as the Nucleophile. Residues Lys-57, Val-70, and 86–87 (ES) each bind glutathione. The region spanning 107–230 (DPLKKVQDKL…VQAEFLRTRS (124 aa)) is the GST C-terminal domain.

It belongs to the GST superfamily. Omega family. Homodimer.

It carries out the reaction 2-amino-6-acetyl-3,7,8,9-tetrahydro-3H-pyrimido[4,5-b][1,4]diazepin-4-one + glutathione disulfide + H2O = 6-pyruvoyl-5,6,7,8-tetrahydropterin + 2 glutathione. Functionally, mediates the conversion of 2-amino-4-oxo-6-pyruvoyl-5,6,7,8-tetrahydropteridine (6-PTP; also named 6-pyruvoyltetrahydropterin) to 2-amino-6-acetyl-3,7,8,9-tetrahydro-3H-pyrimido(4,5-b)[1,4]diazepin-4-one (pyrimidodiazepine or PDA), a key intermediate in red eye pigment drosopterin biosynthesis. This chain is Pyrimidodiazepine synthase, found in Drosophila melanogaster (Fruit fly).